The chain runs to 1072 residues: Carbamoyl phosphate synthase large chain (1072 aa).

The segment at Met1 to Glu401 is carboxyphosphate synthetic domain. Residues Arg129, Arg169, Gly175, Gly176, Lys208, Ile210, Glu215, Gly241, Val242, His243, Gln284, and Glu298 each coordinate ATP. The 195-residue stretch at Arg133–Val327 folds into the ATP-grasp 1 domain. The Mg(2+) site is built by Gln284, Glu298, and Asn300. Mn(2+) contacts are provided by Gln284, Glu298, and Asn300. The segment at Leu402–Ser546 is oligomerization domain. The interval Ile547–Gly929 is carbamoyl phosphate synthetic domain. Positions Glu671–Leu861 constitute an ATP-grasp 2 domain. Positions 707, 746, 752, 777, 778, 779, 780, 820, and 832 each coordinate ATP. Mg(2+) is bound by residues Gln820, Glu832, and Asn834. Mn(2+) contacts are provided by Gln820, Glu832, and Asn834. Positions Ile930–Ala1072 constitute an MGS-like domain. The tract at residues Ile930–Ala1072 is allosteric domain.

The protein belongs to the CarB family. In terms of assembly, composed of two chains; the small (or glutamine) chain promotes the hydrolysis of glutamine to ammonia, which is used by the large (or ammonia) chain to synthesize carbamoyl phosphate. Tetramer of heterodimers (alpha,beta)4. Mg(2+) serves as cofactor. It depends on Mn(2+) as a cofactor.

The catalysed reaction is hydrogencarbonate + L-glutamine + 2 ATP + H2O = carbamoyl phosphate + L-glutamate + 2 ADP + phosphate + 2 H(+). It carries out the reaction hydrogencarbonate + NH4(+) + 2 ATP = carbamoyl phosphate + 2 ADP + phosphate + 2 H(+). It functions in the pathway amino-acid biosynthesis; L-arginine biosynthesis; carbamoyl phosphate from bicarbonate: step 1/1. Its pathway is pyrimidine metabolism; UMP biosynthesis via de novo pathway; (S)-dihydroorotate from bicarbonate: step 1/3. In terms of biological role, large subunit of the glutamine-dependent carbamoyl phosphate synthetase (CPSase). CPSase catalyzes the formation of carbamoyl phosphate from the ammonia moiety of glutamine, carbonate, and phosphate donated by ATP, constituting the first step of 2 biosynthetic pathways, one leading to arginine and/or urea and the other to pyrimidine nucleotides. The large subunit (synthetase) binds the substrates ammonia (free or transferred from glutamine from the small subunit), hydrogencarbonate and ATP and carries out an ATP-coupled ligase reaction, activating hydrogencarbonate by forming carboxy phosphate which reacts with ammonia to form carbamoyl phosphate. This is Carbamoyl phosphate synthase large chain from Bacillus cereus (strain AH187).